We begin with the raw amino-acid sequence, 434 residues long: Adenylosuccinate synthetase (434 aa).

GTP contacts are provided by residues 15–21 (GDEGKGK) and 43–45 (GHT). Catalysis depends on D16, which acts as the Proton acceptor. The Mg(2+) site is built by D16 and G43. IMP is bound by residues 16 to 19 (DEGK), 41 to 44 (NAGH), T133, R147, Q228, T243, and R307. H44 (proton donor) is an active-site residue. 303–309 (SVTGRAR) lines the substrate pocket. Residues R309, 335-337 (KLD), and 418-420 (STG) each bind GTP.

This sequence belongs to the adenylosuccinate synthetase family. As to quaternary structure, homodimer. Mg(2+) serves as cofactor.

It is found in the cytoplasm. It carries out the reaction IMP + L-aspartate + GTP = N(6)-(1,2-dicarboxyethyl)-AMP + GDP + phosphate + 2 H(+). It functions in the pathway purine metabolism; AMP biosynthesis via de novo pathway; AMP from IMP: step 1/2. Plays an important role in the de novo pathway of purine nucleotide biosynthesis. Catalyzes the first committed step in the biosynthesis of AMP from IMP. This Neisseria gonorrhoeae (strain NCCP11945) protein is Adenylosuccinate synthetase.